Here is a 558-residue protein sequence, read N- to C-terminus: Cytochrome P450 monooxygenase grgG (558 aa).

A helical membrane pass occupies residues 11–31 (PASFIYFPLLILVGHALIFIL). Cysteine 470 contacts heme.

The protein belongs to the cytochrome P450 family. Requires heme as cofactor.

It is found in the membrane. The protein operates within secondary metabolite biosynthesis. Its function is as follows. Cytochrome P450 monooxygenase; part of the gene cluster that mediates the biosynthesis of gregatin A, a fungal polyketide featuring an alkylated furanone core. The PKS grgA synthesizes C11 and C4 polyketide chains in the presence and absence of the trans-enoyl reductase grgB, respectively. The polyketide transferase grgF is then responsible for the fusion of the two carbon chains to produce the furanone skeleton of gregatin A. Next, the cytochrome P450 monooxygenase grgG performs the oxidative cyclization to furnish the gregatin scaffold and leads to the formation of desmethylgregatin A. In this transformation, grgG initially abstracts a hydrogen atom from C-8 to generate a substrate radical, from which one electron is transferred to the iron-heme center to yield a carbocationic species. Heterocyclization along with double-bond isomerizations provides desmethylgregatin A with the furanone ring. Alternatively, grgG might provide hydroxylation at the C-8 radical, which is followed by dehydration to give the cyclized desmethylgregatin A. Finally, the O-methyltransferase grgD methylates the carboxyl group of desmethylgregatin A to provide gregatin A. This chain is Cytochrome P450 monooxygenase grgG (grgG), found in Penicillium sp.